Here is a 361-residue protein sequence, read N- to C-terminus: Ribosomal RNA large subunit methyltransferase M (361 aa).

S-adenosyl-L-methionine is bound by residues serine 187, 220 to 223, aspartate 239, aspartate 259, and aspartate 276; that span reads CPGG. Lysine 305 functions as the Proton acceptor in the catalytic mechanism.

Belongs to the class I-like SAM-binding methyltransferase superfamily. RNA methyltransferase RlmE family. RlmM subfamily. As to quaternary structure, monomer.

The protein resides in the cytoplasm. It carries out the reaction cytidine(2498) in 23S rRNA + S-adenosyl-L-methionine = 2'-O-methylcytidine(2498) in 23S rRNA + S-adenosyl-L-homocysteine + H(+). Catalyzes the 2'-O-methylation at nucleotide C2498 in 23S rRNA. The polypeptide is Ribosomal RNA large subunit methyltransferase M (Shewanella baltica (strain OS223)).